Consider the following 466-residue polypeptide: E3 SUMO-protein ligase TRIM60 (466 aa).

Residues 15–56 (CYICSDFMEDPVTSRCGHNFCFACLRLLWDDLQGNIFCPVCQ) form an RING-type zinc finger. Residues 91 to 132 (EEHTVCPKHDQPLVLFCVRDRDVLCTQCSLSVEHQGHYTCPI) form a B box-type zinc finger. Residues cysteine 96, histidine 99, cysteine 118, and histidine 124 each coordinate Zn(2+). Residues 171 to 223 (LREEAQYQKIEIRYEIGQIKLFLQSEYEAHLNESHMEELRSFSELNGYLETLL) adopt a coiled-coil conformation. In terms of domain architecture, B30.2/SPRY spans 272-462 (LSLPAQYSGL…LEILTHPTPD (191 aa)).

It belongs to the TRIM/RBCC family.

E3 SUMO-protein ligase that mediates SUMOylation of TAB2 leading to inhibition of NF-kappa-B and MAPK pathways by suppressing the TRAF6/TAB2/TAK1 complex. The sequence is that of E3 SUMO-protein ligase TRIM60 (Trim60) from Mus musculus (Mouse).